A 123-amino-acid chain; its full sequence is Dihydroneopterin triphosphate 2'-epimerase (123 aa).

This sequence belongs to the DHNA family. Homooctamer. Dimer of tetramers.

The catalysed reaction is 7,8-dihydroneopterin 3'-triphosphate = 7,8-dihydromonapterin 3'-triphosphate. Its function is as follows. Catalyzes the epimerization of carbon 2' of the side chain of 7,8-dihydroneopterin triphosphate (H2NTP) to form 7,8-dihydromonapterin triphosphate (H2MTP). Is required for tetrahydromonapterin biosynthesis. This chain is Dihydroneopterin triphosphate 2'-epimerase, found in Pseudomonas aeruginosa (strain ATCC 15692 / DSM 22644 / CIP 104116 / JCM 14847 / LMG 12228 / 1C / PRS 101 / PAO1).